Consider the following 55-residue polypeptide: Large ribosomal subunit protein bL33 (55 aa).

This sequence belongs to the bacterial ribosomal protein bL33 family.

The chain is Large ribosomal subunit protein bL33 from Roseobacter denitrificans (strain ATCC 33942 / OCh 114) (Erythrobacter sp. (strain OCh 114)).